We begin with the raw amino-acid sequence, 330 residues long: Glucokinase (330 aa).

The protein belongs to the ROK (NagC/XylR) family.

Its subcellular location is the cytoplasm. The enzyme catalyses D-glucose + ATP = D-glucose 6-phosphate + ADP + H(+). The chain is Glucokinase (glcK) from Halalkalibacterium halodurans (strain ATCC BAA-125 / DSM 18197 / FERM 7344 / JCM 9153 / C-125) (Bacillus halodurans).